The following is a 346-amino-acid chain: N-acetyl-gamma-glutamyl-phosphate reductase (346 aa).

C149 is a catalytic residue.

Belongs to the NAGSA dehydrogenase family. Type 1 subfamily.

It is found in the cytoplasm. The catalysed reaction is N-acetyl-L-glutamate 5-semialdehyde + phosphate + NADP(+) = N-acetyl-L-glutamyl 5-phosphate + NADPH + H(+). It functions in the pathway amino-acid biosynthesis; L-arginine biosynthesis; N(2)-acetyl-L-ornithine from L-glutamate: step 3/4. In terms of biological role, catalyzes the NADPH-dependent reduction of N-acetyl-5-glutamyl phosphate to yield N-acetyl-L-glutamate 5-semialdehyde. In Saccharophagus degradans (strain 2-40 / ATCC 43961 / DSM 17024), this protein is N-acetyl-gamma-glutamyl-phosphate reductase.